The sequence spans 177 residues: Adenylate kinase (177 aa).

Position 13-18 (13-18 (GCGKGT)) interacts with ATP. The NMP stretch occupies residues 33–62 (SSGDIIREEMKKSSKEATVIREMVNSGRLA). AMP-binding positions include serine 34, arginine 39, 60–62 (RLA), 85–88 (GYPR), and glutamine 92. The segment at 119 to 127 (GRNEGRDDD) is LID. Residue arginine 120 coordinates ATP. AMP-binding residues include arginine 124 and arginine 135.

Belongs to the adenylate kinase family. In terms of assembly, monomer.

It is found in the cytoplasm. The enzyme catalyses AMP + ATP = 2 ADP. Its function is as follows. Catalyzes the reversible transfer of the terminal phosphate group between ATP and AMP. Plays an important role in cellular energy homeostasis and in adenine nucleotide metabolism. The chain is Adenylate kinase from Encephalitozoon cuniculi (strain GB-M1) (Microsporidian parasite).